Reading from the N-terminus, the 243-residue chain is Protein-L-isoaspartate O-methyltransferase (243 aa).

S87 is a catalytic residue.

It belongs to the methyltransferase superfamily. L-isoaspartyl/D-aspartyl protein methyltransferase family.

The protein localises to the cytoplasm. It catalyses the reaction [protein]-L-isoaspartate + S-adenosyl-L-methionine = [protein]-L-isoaspartate alpha-methyl ester + S-adenosyl-L-homocysteine. In terms of biological role, catalyzes the methyl esterification of L-isoaspartyl residues in peptides and proteins that result from spontaneous decomposition of normal L-aspartyl and L-asparaginyl residues. It plays a role in the repair and/or degradation of damaged proteins. In Methanosarcina mazei (strain ATCC BAA-159 / DSM 3647 / Goe1 / Go1 / JCM 11833 / OCM 88) (Methanosarcina frisia), this protein is Protein-L-isoaspartate O-methyltransferase.